The primary structure comprises 253 residues: Triosephosphate isomerase (253 aa).

9–11 (NWK) is a substrate binding site. Catalysis depends on His94, which acts as the Electrophile. The Proton acceptor role is filled by Glu163. Residues Gly169, Ser209, and 230–231 (GG) each bind substrate.

This sequence belongs to the triosephosphate isomerase family. As to quaternary structure, homodimer.

Its subcellular location is the cytoplasm. It catalyses the reaction D-glyceraldehyde 3-phosphate = dihydroxyacetone phosphate. The protein operates within carbohydrate biosynthesis; gluconeogenesis. It participates in carbohydrate degradation; glycolysis; D-glyceraldehyde 3-phosphate from glycerone phosphate: step 1/1. In terms of biological role, involved in the gluconeogenesis. Catalyzes stereospecifically the conversion of dihydroxyacetone phosphate (DHAP) to D-glyceraldehyde-3-phosphate (G3P). The sequence is that of Triosephosphate isomerase from Dehalococcoides mccartyi (strain ATCC BAA-2100 / JCM 16839 / KCTC 5957 / BAV1).